The primary structure comprises 124 residues: Fluoride-specific ion channel FluC 1 (124 aa).

4 helical membrane passes run 4–24 (VLIGVAGAAGAVARLLVGAWI), 36–56 (GTFAVNIAGSLLLGLLTGLVV), 67–87 (VVLGAGFLGAFTTFSTWLLDL), and 103–123 (AALSTGLGLLAAWLGLALGWG). 2 residues coordinate Na(+): Gly75 and Thr78.

Belongs to the fluoride channel Fluc/FEX (TC 1.A.43) family.

It localises to the cell membrane. The enzyme catalyses fluoride(in) = fluoride(out). Na(+) is not transported, but it plays an essential structural role and its presence is essential for fluoride channel function. Functionally, fluoride-specific ion channel. Important for reducing fluoride concentration in the cell, thus reducing its toxicity. The protein is Fluoride-specific ion channel FluC 1 of Symbiobacterium thermophilum (strain DSM 24528 / JCM 14929 / IAM 14863 / T).